Consider the following 686-residue polypeptide: X-linked interleukin-1 receptor accessory protein-like 2 (686 aa).

A signal peptide spans 1-16 (MKLPLLLALVVCSAVS). The Extracellular portion of the chain corresponds to 17–354 (TNLKMVSKRN…LLRKKDLIYK (338 aa)). In terms of domain architecture, Ig-like C2-type 1 spans 32 to 132 (IDWSVDLKTY…YCMKVSMSLT (101 aa)). A disulfide bridge connects residues Cys53 and Cys116. 5 N-linked (GlcNAc...) asparagine glycosylation sites follow: Asn63, Asn120, Asn136, Asn211, and Asn328. Ig-like C2-type domains lie at 141–232 (CYNS…LKVT) and 239–347 (PPKP…VLLR). Cystine bridges form between Cys162-Cys214 and Cys265-Cys331. Residues 355 to 375 (IELAGGLGAIFLLLILLLVVY) form a helical membrane-spanning segment. Topologically, residues 376 to 686 (KCYNIELMLF…KELSFTSDIW (311 aa)) are cytoplasmic. Residues 400 to 556 (KEYDAYLSYT…KFWKHLVYEM (157 aa)) form the TIR domain. Glu488 is a catalytic residue.

It belongs to the interleukin-1 receptor family. As to expression, detected in fetal brain after day 12.5, in particular in parts of the diencephalon and in the basal plate of the spinal cord. In postnatal brain detected in cerebral cortex, olfactory bulb, in the CA1 region of the hippocampus and in Purkinje cells of the Xth cerebellar lobule.

It localises to the membrane. The catalysed reaction is NAD(+) + H2O = ADP-D-ribose + nicotinamide + H(+). This chain is X-linked interleukin-1 receptor accessory protein-like 2 (Il1rapl2), found in Mus musculus (Mouse).